A 150-amino-acid polypeptide reads, in one-letter code: Truncated transcription factor CAULIFLOWER A (150 aa).

Positions 1 to 61 constitute an MADS-box domain; the sequence is MGRGRVEMKR…GKLFEYSSES (61 aa). Residues 90 to 150 enclose the K-box; partial domain; it reads QTNWSMEYSR…IRSRKNQLMH (61 aa).

As to quaternary structure, homodimer capable of binding to CArG-box sequences. In terms of tissue distribution, expressed in some of the meristems of arrest-stage cauliflower heads.

It is found in the nucleus. Functionally, probable transcription factor that promotes early floral meristem identity in synergy with APETALA1, FRUITFULL and LEAFY. Is required subsequently for the transition of an inflorescence meristem into a floral meristem. Seems to be partially redundant to the function of APETALA1. In Brassica oleracea var. botrytis (Cauliflower), this protein is Truncated transcription factor CAULIFLOWER A (CAL-A).